The chain runs to 113 residues: Putative pterin-4-alpha-carbinolamine dehydratase (113 aa).

The protein belongs to the pterin-4-alpha-carbinolamine dehydratase family.

The catalysed reaction is (4aS,6R)-4a-hydroxy-L-erythro-5,6,7,8-tetrahydrobiopterin = (6R)-L-erythro-6,7-dihydrobiopterin + H2O. This is Putative pterin-4-alpha-carbinolamine dehydratase from Pelodictyon phaeoclathratiforme (strain DSM 5477 / BU-1).